The primary structure comprises 125 residues: Fluoride-specific ion channel FluC (125 aa).

The next 4 helical transmembrane spans lie at 1–21, 32–52, 68–88, and 101–121; these read MIQALLVAVGGAIGSVLRYFV, AFPWGTLAVNVVGCFVIGVFA, LLITGFLGGFTTFSAFSLDAI, and IYIAASVGLSMAAVFAGLAIM. Na(+) is bound by residues Gly-75 and Thr-78.

This sequence belongs to the fluoride channel Fluc/FEX (TC 1.A.43) family.

It is found in the cell inner membrane. It carries out the reaction fluoride(in) = fluoride(out). Na(+) is not transported, but it plays an essential structural role and its presence is essential for fluoride channel function. Fluoride-specific ion channel. Important for reducing fluoride concentration in the cell, thus reducing its toxicity. The chain is Fluoride-specific ion channel FluC from Rhizobium etli (strain ATCC 51251 / DSM 11541 / JCM 21823 / NBRC 15573 / CFN 42).